Reading from the N-terminus, the 565-residue chain is Berberine bridge enzyme-like C-2 (565 aa).

Positions 1 to 17 (MFPIIILISFSFTFLFA) are cleaved as a signal peptide. N28 and N40 each carry an N-linked (GlcNAc...) asparagine glycan. C32 and C94 are joined by a disulfide. The region spanning 72–248 (YMPKPTVIIL…YAWKIRLLKV (177 aa)) is the FAD-binding PCMH-type domain. At H109 the chain carries Pros-8alpha-FAD histidine. 2 N-linked (GlcNAc...) asparagine glycosylation sites follow: N363 and N502.

It belongs to the oxygen-dependent FAD-linked oxidoreductase family. Requires FAD as cofactor.

Its subcellular location is the vacuole. It functions in the pathway alkaloid biosynthesis; nicotine biosynthesis. Its function is as follows. Involved in the biosynthesis of pyridine alkaloid natural products, leading mainly to the production of anabasine, anatabine, nicotine and nornicotine, effective deterrents against herbivores with antiparasitic and pesticide properties (neurotoxins); nornicotine serves as the precursor in the synthesis of the carcinogen compound N'-nitrosonornicotine (NNN). Catalyzes a late oxidation step subsequent to the pyridine ring condensation reaction in the biosynthesis of alkaloids. The chain is Berberine bridge enzyme-like C-2 from Nicotiana tabacum (Common tobacco).